The primary structure comprises 76 residues: Attractin (76 aa).

The signal sequence occupies residues 1 to 18 (MKVAIIILSLALVAAVFA). 3 disulfides stabilise this stretch: C22/C59, C31/C51, and C38/C44. Residue N26 is glycosylated (N-linked (GlcNAc...) asparagine).

Binds to temptin and enticin. In terms of tissue distribution, produced by the albumen gland of the egg cordons.

Its subcellular location is the secreted. Its function is as follows. Water-borne pheromone that attract the marine mollusk Aplysia into breeding aggregations and coordinate male and female reproductive behavior within the aggregation. The polypeptide is Attractin (ATT) (Aplysia californica (California sea hare)).